The chain runs to 418 residues: Nucleoside permease NupC (418 aa).

9 helical membrane passes run 2-22 (IFSS…AWVF), 34-54 (IVSA…VPLG), 93-113 (IGGF…ASLI), 174-194 (IFAV…AGYA), 198-218 (IPLP…LLFA), 264-284 (LLAF…VGGF), 292-314 (LGLI…WSQA), 354-374 (AIIT…MLIG), and 395-415 (VLVG…FIGL).

This sequence belongs to the concentrative nucleoside transporter (CNT) (TC 2.A.41) family.

The protein resides in the cell inner membrane. Its function is as follows. Involved in purine nucleosides uptake. Could also be involved in uptake of nucleobases. The sequence is that of Nucleoside permease NupC from Helicobacter pylori (strain ATCC 700392 / 26695) (Campylobacter pylori).